A 291-amino-acid chain; its full sequence is Lipoyl synthase (291 aa).

7 residues coordinate [4Fe-4S] cluster: C35, C40, C46, C61, C65, C68, and S273. The Radical SAM core domain maps to 47 to 262 (FGKRQATFLI…KEKALAMGFE (216 aa)).

The protein belongs to the radical SAM superfamily. Lipoyl synthase family. Requires [4Fe-4S] cluster as cofactor.

It is found in the cytoplasm. It catalyses the reaction [[Fe-S] cluster scaffold protein carrying a second [4Fe-4S](2+) cluster] + N(6)-octanoyl-L-lysyl-[protein] + 2 oxidized [2Fe-2S]-[ferredoxin] + 2 S-adenosyl-L-methionine + 4 H(+) = [[Fe-S] cluster scaffold protein] + N(6)-[(R)-dihydrolipoyl]-L-lysyl-[protein] + 4 Fe(3+) + 2 hydrogen sulfide + 2 5'-deoxyadenosine + 2 L-methionine + 2 reduced [2Fe-2S]-[ferredoxin]. Its pathway is protein modification; protein lipoylation via endogenous pathway; protein N(6)-(lipoyl)lysine from octanoyl-[acyl-carrier-protein]: step 2/2. Its function is as follows. Catalyzes the radical-mediated insertion of two sulfur atoms into the C-6 and C-8 positions of the octanoyl moiety bound to the lipoyl domains of lipoate-dependent enzymes, thereby converting the octanoylated domains into lipoylated derivatives. In Geobacter sp. (strain M21), this protein is Lipoyl synthase.